The following is a 395-amino-acid chain: Syncephapepsin (395 aa).

An N-terminal signal peptide occupies residues 1 to 19; that stretch reads MKFSLALLATVALATISQA. Residues 20-71 constitute a propeptide, activation peptide; it reads APVEKQVAGKPFQLVKNPHYQANATRAIFRAEKKYARHTAIPEQGKTIVKSA. Residues 89 to 391 enclose the Peptidase A1 domain; it reads YYATVSVGTP…NQGVPEVQIA (303 aa). Asp-107 is an active-site residue. Cysteines 120 and 123 form a disulfide. The active site involves Asp-288. Cys-322 and Cys-355 form a disulfide bridge.

This sequence belongs to the peptidase A1 family. As to quaternary structure, monomer.

Hydrolysis of proteins with a broad specificity. Residues recognized to be cleaved were primarily those of trypsin and chymotrypsin and Lys was the most susceptible. The protein is Syncephapepsin (SPSR) of Syncephalastrum racemosum (Filamentous fungus).